The sequence spans 504 residues: Glycerol kinase (504 aa).

ADP is bound at residue T14. Positions 14, 15, and 16 each coordinate ATP. T14 lines the sn-glycerol 3-phosphate pocket. R18 is an ADP binding site. Residues R84, E85, Y136, and D246 each coordinate sn-glycerol 3-phosphate. R84, E85, Y136, D246, and Q247 together coordinate glycerol. ADP contacts are provided by T268 and G311. T268, G311, Q315, and G412 together coordinate ATP. Residues G412 and N416 each contribute to the ADP site.

This sequence belongs to the FGGY kinase family.

It carries out the reaction glycerol + ATP = sn-glycerol 3-phosphate + ADP + H(+). Its pathway is polyol metabolism; glycerol degradation via glycerol kinase pathway; sn-glycerol 3-phosphate from glycerol: step 1/1. With respect to regulation, inhibited by fructose 1,6-bisphosphate (FBP). In terms of biological role, key enzyme in the regulation of glycerol uptake and metabolism. Catalyzes the phosphorylation of glycerol to yield sn-glycerol 3-phosphate. This Aliivibrio fischeri (strain MJ11) (Vibrio fischeri) protein is Glycerol kinase.